The following is a 739-amino-acid chain: Phosphoribosylformylglycinamidine synthase subunit PurL (739 aa).

Histidine 53 is a catalytic residue. ATP is bound by residues tyrosine 56 and lysine 95. Glutamate 97 is a binding site for Mg(2+). Residues serine 98 to histidine 101 and arginine 120 contribute to the substrate site. Histidine 99 (proton acceptor) is an active-site residue. Aspartate 121 serves as a coordination point for Mg(2+). A substrate-binding site is contributed by glutamine 244. Aspartate 274 lines the Mg(2+) pocket. Glutamate 318–glutamine 320 provides a ligand contact to substrate. 2 residues coordinate ATP: aspartate 501 and glycine 538. Mg(2+) is bound at residue asparagine 539. Serine 541 is a substrate binding site.

Belongs to the FGAMS family. In terms of assembly, monomer. Part of the FGAM synthase complex composed of 1 PurL, 1 PurQ and 2 PurS subunits.

The protein localises to the cytoplasm. The enzyme catalyses N(2)-formyl-N(1)-(5-phospho-beta-D-ribosyl)glycinamide + L-glutamine + ATP + H2O = 2-formamido-N(1)-(5-O-phospho-beta-D-ribosyl)acetamidine + L-glutamate + ADP + phosphate + H(+). Its pathway is purine metabolism; IMP biosynthesis via de novo pathway; 5-amino-1-(5-phospho-D-ribosyl)imidazole from N(2)-formyl-N(1)-(5-phospho-D-ribosyl)glycinamide: step 1/2. In terms of biological role, part of the phosphoribosylformylglycinamidine synthase complex involved in the purines biosynthetic pathway. Catalyzes the ATP-dependent conversion of formylglycinamide ribonucleotide (FGAR) and glutamine to yield formylglycinamidine ribonucleotide (FGAM) and glutamate. The FGAM synthase complex is composed of three subunits. PurQ produces an ammonia molecule by converting glutamine to glutamate. PurL transfers the ammonia molecule to FGAR to form FGAM in an ATP-dependent manner. PurS interacts with PurQ and PurL and is thought to assist in the transfer of the ammonia molecule from PurQ to PurL. The chain is Phosphoribosylformylglycinamidine synthase subunit PurL from Listeria monocytogenes serotype 4a (strain HCC23).